The primary structure comprises 335 residues: Phosphatidylglycerol--prolipoprotein diacylglyceryl transferase (335 aa).

The next 3 membrane-spanning stretches (helical) occupy residues 31–51 (IYWYGIIFVCGFLIAILTYSL), 67–87 (YIFLAIPMTIIGARLWSLAIG), and 100–120 (LAIQGGVIAGVLSAAVYFPLI). An a 1,2-diacyl-sn-glycero-3-phospho-(1'-sn-glycerol)-binding site is contributed by Arg163. Transmembrane regions (helical) follow at residues 213-233 (PLFLYESFFNVIVFVFIYFGL), 235-255 (YIKQLKIGFISMSYFFFYGVT), and 277-297 (SLLLIFGVLGALYVQFIAPLL).

It belongs to the Lgt family.

It localises to the cell membrane. It carries out the reaction L-cysteinyl-[prolipoprotein] + a 1,2-diacyl-sn-glycero-3-phospho-(1'-sn-glycerol) = an S-1,2-diacyl-sn-glyceryl-L-cysteinyl-[prolipoprotein] + sn-glycerol 1-phosphate + H(+). Its pathway is protein modification; lipoprotein biosynthesis (diacylglyceryl transfer). Functionally, catalyzes the transfer of the diacylglyceryl group from phosphatidylglycerol to the sulfhydryl group of the N-terminal cysteine of a prolipoprotein, the first step in the formation of mature lipoproteins. In Ureaplasma parvum serovar 3 (strain ATCC 27815 / 27 / NCTC 11736), this protein is Phosphatidylglycerol--prolipoprotein diacylglyceryl transferase.